An 88-amino-acid chain; its full sequence is MAGTPPVAEGITNPPIDELLEVVDSKYSLVTMAAKRARQINAYYAQLGEGLLEYVGPLVETQPQEKPLSIALREIREGLLTAETQEEA.

Belongs to the RNA polymerase subunit omega family. As to quaternary structure, the RNAP catalytic core consists of 2 alpha, 1 beta, 1 beta' and 1 omega subunit. When a sigma factor is associated with the core the holoenzyme is formed, which can initiate transcription.

The enzyme catalyses RNA(n) + a ribonucleoside 5'-triphosphate = RNA(n+1) + diphosphate. In terms of biological role, promotes RNA polymerase assembly. Latches the N- and C-terminal regions of the beta' subunit thereby facilitating its interaction with the beta and alpha subunits. This Thermobifida fusca (strain YX) protein is DNA-directed RNA polymerase subunit omega.